A 229-amino-acid polypeptide reads, in one-letter code: Acetylornithine aminotransferase (229 aa).

Pyridoxal 5'-phosphate contacts are provided by residues 95 to 96 and Phe122; that span reads GA. Arg125 lines the N(2)-acetyl-L-ornithine pocket. 208 to 211 contributes to the pyridoxal 5'-phosphate binding site; it reads DEIQ.

Belongs to the class-III pyridoxal-phosphate-dependent aminotransferase family. ArgD subfamily. In terms of assembly, homodimer. It depends on pyridoxal 5'-phosphate as a cofactor.

The protein localises to the cytoplasm. It catalyses the reaction N(2)-acetyl-L-ornithine + 2-oxoglutarate = N-acetyl-L-glutamate 5-semialdehyde + L-glutamate. The protein operates within amino-acid biosynthesis; L-arginine biosynthesis; N(2)-acetyl-L-ornithine from L-glutamate: step 4/4. The protein is Acetylornithine aminotransferase (argD) of Bacillus amyloliquefaciens (Bacillus velezensis).